Here is a 381-residue protein sequence, read N- to C-terminus: Tryptophan--tRNA ligase (381 aa).

The short motif at Pro-82–His-90 is the 'HIGH' region element. Positions Lys-254–Ser-258 match the 'KMSKS' region motif.

This sequence belongs to the class-I aminoacyl-tRNA synthetase family.

Its subcellular location is the cytoplasm. The enzyme catalyses tRNA(Trp) + L-tryptophan + ATP = L-tryptophyl-tRNA(Trp) + AMP + diphosphate + H(+). The protein is Tryptophan--tRNA ligase of Sulfolobus acidocaldarius (strain ATCC 33909 / DSM 639 / JCM 8929 / NBRC 15157 / NCIMB 11770).